The sequence spans 139 residues: Large-conductance mechanosensitive channel (139 aa).

The next 2 membrane-spanning stretches (helical) occupy residues 9 to 29 and 79 to 99; these read AFAV…GAAF and IQTV…VKAI.

Belongs to the MscL family. Homopentamer.

It localises to the cell inner membrane. Its function is as follows. Channel that opens in response to stretch forces in the membrane lipid bilayer. May participate in the regulation of osmotic pressure changes within the cell. The chain is Large-conductance mechanosensitive channel from Pseudomonas putida (strain GB-1).